Consider the following 64-residue polypeptide: Beta-defensin 5 (64 aa).

Residues 1–22 (MRLHHLLLVLLFLVLSAGSGFT) form the signal peptide. Gln23 bears the Pyrrolidone carboxylic acid mark. Disulfide bonds link Cys31–Cys60, Cys38–Cys53, and Cys43–Cys61.

Belongs to the beta-defensin family. Neutrophilic granules. Alveolar macrophages.

It localises to the secreted. In terms of biological role, has bactericidal activity. Active against E.coli ML35 but not against S.aureus 502A. The sequence is that of Beta-defensin 5 (DEFB5) from Bos taurus (Bovine).